Reading from the N-terminus, the 207-residue chain is Vexin (207 aa).

The interval 55–102 (LELLPHRGDRRDPGDGRRFGRLQTARPPTAHPAKASARPVGISEPKTS) is disordered. Residues 58-72 (LPHRGDRRDPGDGRR) are compositionally biased toward basic and acidic residues.

It belongs to the vexin family.

It localises to the cell membrane. The protein resides in the nucleus. Required for neurogenesis in the neural plate and retina. Strongly cooperates with neural bHLH factors to promote neurogenesis. The chain is Vexin from Pongo abelii (Sumatran orangutan).